The primary structure comprises 226 residues: Phosphoribosylformylglycinamidine synthase subunit PurQ (226 aa).

A Glutamine amidotransferase type-1 domain is found at 3–226 (RVAVIRFPGT…FESLVEWCRS (224 aa)). Residue cysteine 86 is the Nucleophile of the active site. Residues histidine 199 and glutamate 201 contribute to the active site.

As to quaternary structure, part of the FGAM synthase complex composed of 1 PurL, 1 PurQ and 2 PurS subunits.

It is found in the cytoplasm. The enzyme catalyses N(2)-formyl-N(1)-(5-phospho-beta-D-ribosyl)glycinamide + L-glutamine + ATP + H2O = 2-formamido-N(1)-(5-O-phospho-beta-D-ribosyl)acetamidine + L-glutamate + ADP + phosphate + H(+). It catalyses the reaction L-glutamine + H2O = L-glutamate + NH4(+). It functions in the pathway purine metabolism; IMP biosynthesis via de novo pathway; 5-amino-1-(5-phospho-D-ribosyl)imidazole from N(2)-formyl-N(1)-(5-phospho-D-ribosyl)glycinamide: step 1/2. In terms of biological role, part of the phosphoribosylformylglycinamidine synthase complex involved in the purines biosynthetic pathway. Catalyzes the ATP-dependent conversion of formylglycinamide ribonucleotide (FGAR) and glutamine to yield formylglycinamidine ribonucleotide (FGAM) and glutamate. The FGAM synthase complex is composed of three subunits. PurQ produces an ammonia molecule by converting glutamine to glutamate. PurL transfers the ammonia molecule to FGAR to form FGAM in an ATP-dependent manner. PurS interacts with PurQ and PurL and is thought to assist in the transfer of the ammonia molecule from PurQ to PurL. In Methanopyrus kandleri (strain AV19 / DSM 6324 / JCM 9639 / NBRC 100938), this protein is Phosphoribosylformylglycinamidine synthase subunit PurQ.